Reading from the N-terminus, the 331-residue chain is MELLPRRQQEVLQATVHHYVDTIEPVGSKTLVQRFGLQASSATVRSAMGALEQKGLLVQPHPSAGRIPSPRGYRHYVDCLLPKPGAAVHHLEQELTQLSLRWAALDDLLQQLTRRLTDFTGLMSLITLPQPSEQRLHAIRLVPTDERLLVMLVADSSQTHHLNLRLPHGSVHQVAALERWTDDQLHQSGQISWESLPQQLQTCGQALREALHNEEGRFISPSDQSAHVHGVSRLVAQPEFSDSTKVAPLLDLMDCNPAAFIPSGPGHDDWVWIGGEHPHTALSDCSVIQSSYRDGQGGVGQVALVGPMRMAYATARAAVQCVAKHLNHLLS.

Belongs to the HrcA family.

Its function is as follows. Negative regulator of class I heat shock genes (grpE-dnaK-dnaJ and groELS operons). Prevents heat-shock induction of these operons. This Synechococcus sp. (strain WH7803) protein is Heat-inducible transcription repressor HrcA.